Here is an 89-residue protein sequence, read N- to C-terminus: uncharacterized protein (89 aa).

3 helical membrane-spanning segments follow: residues 5 to 27, 32 to 51, and 63 to 85; these read TLTE…GFTA, LYIG…KRLL, and LFFS…ALVA.

Its subcellular location is the cell membrane. This is an uncharacterized protein from Bacillus subtilis (strain 168).